Here is a 441-residue protein sequence, read N- to C-terminus: RUN domain-containing protein 3A (441 aa).

An interaction with RAP2A region spans residues 1–293; it reads MEASFVQTTM…LQLQLEEAAA (293 aa). The RUN domain occupies 52 to 184; that stretch reads DDSSEEFVNF…IDFSFCLKGE (133 aa). Residue threonine 210 is modified to Phosphothreonine. The tract at residues 211–234 is disordered; sequence DEEERHSAESSTSEDNSPEHPYLP. Serine 227 carries the phosphoserine modification. The stretch at 262–317 forms a coiled coil; sequence YLEELVRLRESQLKDLEAENRRLQLQLEEAAAQNQREKRELEGVILELQEQLTGLI. Over residues 367–379 the composition is skewed to polar residues; it reads PLSAEASLSSDSQ. Residues 367-399 form a disordered region; that stretch reads PLSAEASLSSDSQRLGEGKRDEEPWGPIGKDPT. Over residues 380-389 the composition is skewed to basic and acidic residues; sequence RLGEGKRDEE. A phosphoserine mark is found at serine 411 and serine 414.

This sequence belongs to the RUNDC3 family. In terms of assembly, interacts with the GTP-bound form of RAP2A.

Functionally, may act as an effector of RAP2A in neuronal cells. This Bos taurus (Bovine) protein is RUN domain-containing protein 3A (RUNDC3A).